Consider the following 455-residue polypeptide: Cysteine--tRNA ligase (455 aa).

Residue cysteine 28 coordinates Zn(2+). The 'HIGH' region motif lies at 30–40; the sequence is MTVYDYCHLGH. The Zn(2+) site is built by cysteine 209, histidine 234, and glutamate 238. The short motif at 266–270 is the 'KMSKS' region element; sequence KMSKS. Lysine 269 is an ATP binding site.

Belongs to the class-I aminoacyl-tRNA synthetase family. In terms of assembly, monomer. Zn(2+) is required as a cofactor.

The protein localises to the cytoplasm. It carries out the reaction tRNA(Cys) + L-cysteine + ATP = L-cysteinyl-tRNA(Cys) + AMP + diphosphate. The chain is Cysteine--tRNA ligase from Methylobacillus flagellatus (strain ATCC 51484 / DSM 6875 / VKM B-1610 / KT).